A 142-amino-acid chain; its full sequence is Serine protease inhibitor (142 aa).

S1 carries the post-translational modification N-acetylserine.

In terms of biological role, serine protease inhibitor. Active against beta-trypsin and alpha-chymotrypsin with dissociation constants of 0.35 nM and 40 nM respectively. Inhibits factor XIa, but not other enzymes involved in coagulation and fibrinolysis. Does not inhibit subtilisin, lysyl endopeptidase, arginyl endopeptidase or papain. The protein is Serine protease inhibitor of Lentinula edodes (Shiitake mushroom).